We begin with the raw amino-acid sequence, 427 residues long: Dihydroorotase (427 aa).

2 residues coordinate Zn(2+): His57 and His59. Substrate-binding positions include 59–61 (HLR) and Asn91. Zn(2+)-binding residues include Asp149, His176, and His229. Asn275 is a binding site for substrate. Asp302 contributes to the Zn(2+) binding site. Asp302 is a catalytic residue. Substrate-binding positions include His306 and 320–321 (FG).

Belongs to the metallo-dependent hydrolases superfamily. DHOase family. Class I DHOase subfamily. Requires Zn(2+) as cofactor.

The enzyme catalyses (S)-dihydroorotate + H2O = N-carbamoyl-L-aspartate + H(+). It functions in the pathway pyrimidine metabolism; UMP biosynthesis via de novo pathway; (S)-dihydroorotate from bicarbonate: step 3/3. Its function is as follows. Catalyzes the reversible cyclization of carbamoyl aspartate to dihydroorotate. The sequence is that of Dihydroorotase from Shouchella clausii (strain KSM-K16) (Alkalihalobacillus clausii).